The chain runs to 287 residues: Very long chain fatty acid elongase 4 (287 aa).

Transmembrane regions (helical) follow at residues 33–53 (ILVY…EHIM), 64–84 (PFVV…YSCV), and 115–135 (FWVF…VFLV). Residues 145-149 (HWYHH) carry the HxxHH motif motif. H148 functions as the Nucleophile in the catalytic mechanism. Helical transmembrane passes span 150 to 170 (LTVA…GLWF), 172 to 192 (TMNY…ACGM), 199 to 219 (IAPF…LIVL), and 241 to 261 (LGLV…GKLY).

Belongs to the ELO family.

The protein resides in the membrane. The enzyme catalyses a very-long-chain acyl-CoA + malonyl-CoA + H(+) = a very-long-chain 3-oxoacyl-CoA + CO2 + CoA. Involved in the synthesis of fatty acids. Elongates C16:0 and C18:0 fatty acids to C26:0, with C24:0 being the main product. This chain is Very long chain fatty acid elongase 4, found in Trypanosoma cruzi (strain CL Brener).